We begin with the raw amino-acid sequence, 413 residues long: Elongation factor 1-alpha (413 aa).

In terms of domain architecture, tr-type G spans 5–211; it reads KTHMNLAFIG…DALDEPDKPV (207 aa). The tract at residues 14–21 is G1; that stretch reads GHVDHGKS. 14–21 serves as a coordination point for GTP; the sequence is GHVDHGKS. Position 21 (S21) interacts with Mg(2+). A G2 region spans residues 60–64; it reads GVTID. Positions 81 to 84 are G3; the sequence is DCPG. GTP is bound by residues 81-85 and 136-139; these read DCPGH and NKMD. The G4 stretch occupies residues 136–139; sequence NKMD. The segment at 175 to 177 is G5; the sequence is SAF.

The protein belongs to the TRAFAC class translation factor GTPase superfamily. Classic translation factor GTPase family. EF-Tu/EF-1A subfamily.

It localises to the cytoplasm. It catalyses the reaction GTP + H2O = GDP + phosphate + H(+). In terms of biological role, GTP hydrolase that promotes the GTP-dependent binding of aminoacyl-tRNA to the A-site of ribosomes during protein biosynthesis. This chain is Elongation factor 1-alpha, found in Methanosphaera stadtmanae (strain ATCC 43021 / DSM 3091 / JCM 11832 / MCB-3).